A 347-amino-acid chain; its full sequence is N-acetyl-gamma-glutamyl-phosphate reductase (347 aa).

Cys152 is a catalytic residue.

Belongs to the NAGSA dehydrogenase family. Type 1 subfamily.

It is found in the cytoplasm. The enzyme catalyses N-acetyl-L-glutamate 5-semialdehyde + phosphate + NADP(+) = N-acetyl-L-glutamyl 5-phosphate + NADPH + H(+). The protein operates within amino-acid biosynthesis; L-arginine biosynthesis; N(2)-acetyl-L-ornithine from L-glutamate: step 3/4. Functionally, catalyzes the NADPH-dependent reduction of N-acetyl-5-glutamyl phosphate to yield N-acetyl-L-glutamate 5-semialdehyde. The sequence is that of N-acetyl-gamma-glutamyl-phosphate reductase from Neisseria meningitidis serogroup C (strain 053442).